Reading from the N-terminus, the 177-residue chain is Isopentenyl-diphosphate Delta-isomerase (177 aa).

Residues H22 and H28 each coordinate Mn(2+). The region spanning 26–160 (LRHKAISVFV…PERFTPWLRI (135 aa)) is the Nudix hydrolase domain. The active site involves C62. H64 contacts Mn(2+). E82 lines the Mg(2+) pocket. Mn(2+)-binding residues include E108 and E110. E110 is a catalytic residue.

Belongs to the IPP isomerase type 1 family. The cofactor is Mg(2+). Mn(2+) is required as a cofactor.

The protein resides in the cytoplasm. It carries out the reaction isopentenyl diphosphate = dimethylallyl diphosphate. Its pathway is isoprenoid biosynthesis; dimethylallyl diphosphate biosynthesis; dimethylallyl diphosphate from isopentenyl diphosphate: step 1/1. It functions in the pathway porphyrin-containing compound metabolism; chlorophyll biosynthesis. Catalyzes the 1,3-allylic rearrangement of the homoallylic substrate isopentenyl (IPP) to its highly electrophilic allylic isomer, dimethylallyl diphosphate (DMAPP). This Cereibacter sphaeroides (strain ATCC 17025 / ATH 2.4.3) (Rhodobacter sphaeroides) protein is Isopentenyl-diphosphate Delta-isomerase.